We begin with the raw amino-acid sequence, 124 residues long: Small ribosomal subunit protein uS13 (124 aa).

The segment at 95-124 (GLPVNGQRTRTNARSSKGPRRTVAGKKKAR) is disordered. Residues 100-109 (GQRTRTNARS) show a composition bias toward polar residues. The segment covering 111–124 (KGPRRTVAGKKKAR) has biased composition (basic residues).

Belongs to the universal ribosomal protein uS13 family. As to quaternary structure, part of the 30S ribosomal subunit. Forms a loose heterodimer with protein S19. Forms two bridges to the 50S subunit in the 70S ribosome.

Located at the top of the head of the 30S subunit, it contacts several helices of the 16S rRNA. In the 70S ribosome it contacts the 23S rRNA (bridge B1a) and protein L5 of the 50S subunit (bridge B1b), connecting the 2 subunits; these bridges are implicated in subunit movement. Contacts the tRNAs in the A and P-sites. The sequence is that of Small ribosomal subunit protein uS13 from Tropheryma whipplei (strain TW08/27) (Whipple's bacillus).